The sequence spans 202 residues: MKTEIDAKTVKKLRDETGAGMMTCKQALTENHGDYDKAIESLRLKGMATADKKSSRNTNEGLIYSYIHTGSKLGILLEINCETDFVARREEFTDLAKNISMQIASNPEIQVVSLDDISDLTKIEVRKFENAKDDLQNKPEEIKNKIVEGRVEKSLKKQVLLEQEYIRDPNITVTEYIKQVVSILGENIRVQRFTRYVLGEID.

Belongs to the EF-Ts family.

It localises to the plastid. It is found in the chloroplast. In terms of biological role, associates with the EF-Tu.GDP complex and induces the exchange of GDP to GTP. It remains bound to the aminoacyl-tRNA.EF-Tu.GTP complex up to the GTP hydrolysis stage on the ribosome. The sequence is that of Elongation factor Ts, chloroplastic (tsf) from Phaeodactylum tricornutum (strain CCAP 1055/1).